Consider the following 229-residue polypeptide: ATP synthase subunit a (229 aa).

7 helical membrane passes run 25-45, 58-75, 81-101, 110-130, 141-161, 175-195, and 196-216; these read VHIIYTWVVMALLITLGVLGA, FLEVLISGIEEFMVSVTG, FFPLAGTIAIFIAVSNLIGLV, SINTPLACAIVVFVFTHFIGI, FLGPVWWLAPLIFPIEIIGHL, MMGHESVLVILFMLGGAFFAP, and LPIMALGIFVAFVQAFVFFLL.

It belongs to the ATPase A chain family. As to quaternary structure, F-type ATPases have 2 components, CF(1) - the catalytic core - and CF(0) - the membrane proton channel. CF(1) has five subunits: alpha(3), beta(3), gamma(1), delta(1), epsilon(1). CF(0) has three main subunits: a(1), b(2) and c(9-12). The alpha and beta chains form an alternating ring which encloses part of the gamma chain. CF(1) is attached to CF(0) by a central stalk formed by the gamma and epsilon chains, while a peripheral stalk is formed by the delta and b chains.

It localises to the cell inner membrane. Functionally, key component of the proton channel; it plays a direct role in the translocation of protons across the membrane. In Desulfosudis oleivorans (strain DSM 6200 / JCM 39069 / Hxd3) (Desulfococcus oleovorans), this protein is ATP synthase subunit a.